Reading from the N-terminus, the 406-residue chain is Succinylornithine transaminase (406 aa).

Lysine 252 bears the N6-(pyridoxal phosphate)lysine mark.

Belongs to the class-III pyridoxal-phosphate-dependent aminotransferase family. AstC subfamily. The cofactor is pyridoxal 5'-phosphate.

It catalyses the reaction N(2)-succinyl-L-ornithine + 2-oxoglutarate = N-succinyl-L-glutamate 5-semialdehyde + L-glutamate. It participates in amino-acid degradation; L-arginine degradation via AST pathway; L-glutamate and succinate from L-arginine: step 3/5. In terms of biological role, catalyzes the transamination of N(2)-succinylornithine and alpha-ketoglutarate into N(2)-succinylglutamate semialdehyde and glutamate. Can also act as an acetylornithine aminotransferase. The sequence is that of Succinylornithine transaminase from Escherichia fergusonii (strain ATCC 35469 / DSM 13698 / CCUG 18766 / IAM 14443 / JCM 21226 / LMG 7866 / NBRC 102419 / NCTC 12128 / CDC 0568-73).